The chain runs to 411 residues: Methyl-CpG-binding domain protein 2 (411 aa).

The segment at 1-149 is required for interaction with DHX9 and PRMT5; that stretch reads MRAHPGGGRC…GPRATESGKR (149 aa). Positions 1 to 158 are disordered; that stretch reads MRAHPGGGRC…RMDCPALPPG (158 aa). Residues 77-95 show a composition bias toward basic residues; that stretch reads GRGRGRGRGRGRGRGRGRG. Over residues 98–121 the composition is skewed to gly residues; that stretch reads PSGGSGLGGDGGGCGGGGSGGGGA. The 69-residue stretch at 145-213 folds into the MBD domain; sequence ESGKRMDCPA…SSFDFRTGKM (69 aa). Serine 181 carries the post-translational modification Phosphoserine. The interval 214–241 is disordered; sequence MPSKLQKNKQRLRNDPLNQNKGKPDLNT. Over residues 229–241 the composition is skewed to polar residues; that stretch reads PLNQNKGKPDLNT. Phosphoserine is present on serine 407.

In terms of assembly, heterodimer with MBD3 (via N-terminus). Component of the MeCP1 complex that contains HDAC1 and HDAC2. Component of the nucleosome remodeling and deacetylase (NuRD) repressor complex, composed of core proteins MTA1, MTA2, MTA3, RBBP4, RBBP7, HDAC1, HDAC2, MBD2, MBD3, and peripherally associated proteins CDK2AP1, CDK2AP2, GATAD2A, GATAD2B, CHD3, CHD4 and CHD5. The exact stoichiometry of the NuRD complex is unknown, and some subunits such as MBD2 and MBD3, GATAD2A and GATAD2B, and CHD3, CHD4 and CHD5 define mutually exclusive NuRD complexes. Interacts with CDK2AP1. Interacts with DHX9. Interacts with DNMT1. Interacts with GATAD2A/p66-alpha. Interacts with GATAD2B/p66-beta. Interacts with GPN1. Interacts with MIZF. Interacts with PRMT5. Interacts with SIN3A. Interacts with SPHK2. As to expression, highly expressed in brain, heart, kidney, stomach, testis and placenta.

The protein localises to the nucleus. The protein resides in the chromosome. Its function is as follows. Binds CpG islands in promoters where the DNA is methylated at position 5 of cytosine within CpG dinucleotides. Binds hemimethylated DNA as well. Recruits histone deacetylases and DNA methyltransferases to chromatin. Acts as a component of the histone deacetylase NuRD complex which participates in the remodeling of chromatin. Acts as a transcriptional repressor and plays a role in gene silencing. Functions as a scaffold protein, targeting GATAD2A and GATAD2B to chromatin to promote repression. May enhance the activation of some unmethylated cAMP-responsive promoters. This Homo sapiens (Human) protein is Methyl-CpG-binding domain protein 2.